We begin with the raw amino-acid sequence, 268 residues long: UPF0294 protein ETA_26410 (268 aa).

The protein belongs to the UPF0294 family.

The protein localises to the cytoplasm. This Erwinia tasmaniensis (strain DSM 17950 / CFBP 7177 / CIP 109463 / NCPPB 4357 / Et1/99) protein is UPF0294 protein ETA_26410.